A 247-amino-acid chain; its full sequence is Acyl-coenzyme A thioesterase THEM5 (247 aa).

Asp-167 functions as the Proton donor/acceptor in the catalytic mechanism.

The protein belongs to the THEM4/THEM5 thioesterase family. In terms of assembly, homodimer.

Its subcellular location is the mitochondrion matrix. It carries out the reaction hexadecanoyl-CoA + H2O = hexadecanoate + CoA + H(+). The enzyme catalyses (9Z,12Z)-octadecadienoyl-CoA + H2O = (9Z,12Z)-octadecadienoate + CoA + H(+). The catalysed reaction is tetradecanoyl-CoA + H2O = tetradecanoate + CoA + H(+). It catalyses the reaction (9Z)-octadecenoyl-CoA + H2O = (9Z)-octadecenoate + CoA + H(+). It carries out the reaction (9Z)-hexadecenoyl-CoA + H2O = (9Z)-hexadecenoate + CoA + H(+). The enzyme catalyses (5Z,8Z,11Z,14Z)-eicosatetraenoyl-CoA + H2O = (5Z,8Z,11Z,14Z)-eicosatetraenoate + CoA + H(+). The catalysed reaction is octadecanoyl-CoA + H2O = octadecanoate + CoA + H(+). In terms of biological role, has acyl-CoA thioesterase activity towards long-chain (C16 and C18) fatty acyl-CoA substrates, with a preference for linoleoyl-CoA and other unsaturated long-chain fatty acid-CoA esters. Plays an important role in mitochondrial fatty acid metabolism, and in remodeling of the mitochondrial lipid cardiolipin. Required for normal mitochondrial function. In Homo sapiens (Human), this protein is Acyl-coenzyme A thioesterase THEM5 (THEM5).